The chain runs to 113 residues: Class I hydrophobin POH3 (113 aa).

The signal sequence occupies residues 1–21 (MFSRVIFCTFLILPLLAAATA). Cystine bridges form between Cys32/Cys92, Cys39/Cys86, Cys40/Cys73, and Cys93/Cys106. Asn110 carries N-linked (GlcNAc...) asparagine glycosylation.

Belongs to the fungal hydrophobin family. Self-assembles to form functional amyloid fibrils called rodlets. Self-assembly into fibrillar rodlets occurs spontaneously at hydrophobic:hydrophilic interfaces and the rodlets further associate laterally to form amphipathic monolayers. As to expression, expressionn is switched off in the fruiting bodies but abundantly expressed in the vegetative mycelium of both monokaryon and dikaryon.

The protein resides in the secreted. Its subcellular location is the cell wall. Its function is as follows. Aerial growth, conidiation, and dispersal of filamentous fungi in the environment rely upon a capability of their secreting small amphipathic proteins called hydrophobins (HPBs) with low sequence identity. Class I can self-assemble into an outermost layer of rodlet bundles on aerial cell surfaces, conferring cellular hydrophobicity that supports fungal growth, development and dispersal; whereas Class II form highly ordered films at water-air interfaces through intermolecular interactions but contribute nothing to the rodlet structure. POH3 is a class I hydrophobin that causes a large drop in the water-surface tension, enabling hyphae to breach the interface and grow into the air, in both the primary and the secondary mycelium. In the latter mycelium POH3 maight also play a role in the emergence of fruiting bodies. Secreted POH3 could also play a role in facilitating lignin degradation. The chain is Class I hydrophobin POH3 from Pleurotus ostreatus (Oyster mushroom).